A 2156-amino-acid chain; its full sequence is Oxygen-regulated protein 1 (2156 aa).

Positions 1–19 (MSDTPSTGFSIIHPTSSEG) are enriched in polar residues. A disordered region spans residues 1 to 25 (MSDTPSTGFSIIHPTSSEGQVPPPR). Doublecortin domains follow at residues 36–118 (KRIS…VDLD) and 154–233 (RSLV…GNYD). Disordered regions lie at residues 353–375 (VSKT…RTES), 666–686 (SSVA…SRYQ), 1438–1458 (DMEE…MTSS), and 1590–1621 (DWSD…TQEK).

Interacts (via the doublecortin domains) with microtubules. Interacts with RP1L1. Interacts with MAK. In terms of tissue distribution, expressed in retina. Not expressed in heart, brain, placenta, lung, liver, skeletal muscle, kidney, spleen and pancreas.

It localises to the cytoplasm. The protein localises to the cytoskeleton. The protein resides in the cilium axoneme. It is found in the cell projection. Its subcellular location is the cilium. It localises to the photoreceptor outer segment. In terms of biological role, microtubule-associated protein regulating the stability and length of the microtubule-based axoneme of photoreceptors. Required for the differentiation of photoreceptor cells, it plays a role in the organization of the outer segment of rod and cone photoreceptors ensuring the correct orientation and higher-order stacking of outer segment disks along the photoreceptor axoneme. The polypeptide is Oxygen-regulated protein 1 (RP1) (Homo sapiens (Human)).